We begin with the raw amino-acid sequence, 251 residues long: Hydroxyacylglutathione hydrolase (251 aa).

Zn(2+) is bound by residues histidine 53, histidine 55, aspartate 57, histidine 58, histidine 110, aspartate 127, and histidine 165.

It belongs to the metallo-beta-lactamase superfamily. Glyoxalase II family. Monomer. The cofactor is Zn(2+).

It carries out the reaction an S-(2-hydroxyacyl)glutathione + H2O = a 2-hydroxy carboxylate + glutathione + H(+). The protein operates within secondary metabolite metabolism; methylglyoxal degradation; (R)-lactate from methylglyoxal: step 2/2. Its function is as follows. Thiolesterase that catalyzes the hydrolysis of S-D-lactoyl-glutathione to form glutathione and D-lactic acid. This Yersinia pestis protein is Hydroxyacylglutathione hydrolase.